A 444-amino-acid chain; its full sequence is tRNA modification GTPase MnmE (444 aa).

Residues Arg21, Glu79, and Lys118 each coordinate (6S)-5-formyl-5,6,7,8-tetrahydrofolate. Residues 215-365 (GLNVVIVGKP…LVNEIKTNLK (151 aa)) form the TrmE-type G domain. A K(+)-binding site is contributed by Asn225. Residues 225 to 230 (NVGKSS), 244 to 250 (SDIKGTT), and 269 to 272 (DTAG) each bind GTP. Residue Ser229 coordinates Mg(2+). K(+)-binding residues include Ser244, Ile246, and Thr249. A Mg(2+)-binding site is contributed by Thr250. Lys444 serves as a coordination point for (6S)-5-formyl-5,6,7,8-tetrahydrofolate.

The protein belongs to the TRAFAC class TrmE-Era-EngA-EngB-Septin-like GTPase superfamily. TrmE GTPase family. In terms of assembly, homodimer. Heterotetramer of two MnmE and two MnmG subunits. Requires K(+) as cofactor.

It localises to the cytoplasm. In terms of biological role, exhibits a very high intrinsic GTPase hydrolysis rate. Involved in the addition of a carboxymethylaminomethyl (cmnm) group at the wobble position (U34) of certain tRNAs, forming tRNA-cmnm(5)s(2)U34. The sequence is that of tRNA modification GTPase MnmE from Malacoplasma penetrans (strain HF-2) (Mycoplasma penetrans).